Here is a 410-residue protein sequence, read N- to C-terminus: Putative F-box/kelch-repeat protein At1g15680 (410 aa).

In terms of domain architecture, F-box spans 13–58 (CKRRIELPEELLAEIVARLPFISITRFKSVCKGWRSLIESTYFRHL). Kelch repeat units lie at residues 177-227 (VVCM…SLKK) and 274-327 (AYTT…YFPV).

The protein is Putative F-box/kelch-repeat protein At1g15680 of Arabidopsis thaliana (Mouse-ear cress).